An 859-amino-acid chain; its full sequence is Heat shock protein 105 kDa (859 aa).

Serine 2 is modified (N-acetylserine). Lysine 471 carries the post-translational modification N6-acetyllysine. Phosphoserine occurs at positions 509 and 510. 2 disordered regions span residues 515-585 (MDCQ…PPEA) and 797-859 (CEPV…MDLD). Polar residues predominate over residues 533-555 (QQDNNEAGTQPQVQTDGHQTSQS). Serine 558 is modified (phosphoserine). Phosphothreonine is present on threonine 562. Composition is skewed to basic and acidic residues over residues 564-585 (EENK…PPEA) and 806-815 (PKIESPKLER). Phosphoserine is present on serine 810. Threonine 816 carries the phosphothreonine modification. A compositionally biased stretch (basic and acidic residues) spans 822-831 (TDKKEEDLDG). The segment covering 850–859 (EKSSINMDLD) has biased composition (polar residues).

Belongs to the heat shock protein 70 family. As to quaternary structure, interacts with HSPA8/HSC70. Interacts with HSPA1A (via NBD) and HSPA1B (via NBD). Phosphorylation on Ser-509 may be important for regulation of the HSPA8/HSC70 chaperone activity.

The protein resides in the cytoplasm. In terms of biological role, acts as a nucleotide-exchange factor (NEF) for chaperone proteins HSPA1A and HSPA1B, promoting the release of ADP from HSPA1A/B thereby triggering substrate release. Prevents the aggregation of denatured proteins in cells under severe stress, on which the ATP levels decrease markedly. Inhibits HSPA8/HSC70 ATPase and chaperone activities. The chain is Heat shock protein 105 kDa (HSPH1) from Bos taurus (Bovine).